Here is a 490-residue protein sequence, read N- to C-terminus: ATP-dependent 6-phosphofructokinase (490 aa).

Residues Gly109, 175-176 (RG), and 200-203 (GDGT) contribute to the ATP site. A Mg(2+)-binding site is contributed by Asp201. Substrate is bound by residues 229–231 (TID), 274–276 (MGR), Glu327, and 383–386 (YMIR). Asp231 acts as the Proton acceptor in catalysis. A Peroxisomal targeting signal motif is present at residues 488–490 (SKL).

The protein belongs to the phosphofructokinase type A (PFKA) family. PPi-dependent PFK group II subfamily. Atypical ATP-dependent clade 'X' sub-subfamily. Homotetramer. Mg(2+) is required as a cofactor.

Its subcellular location is the glycosome. The enzyme catalyses beta-D-fructose 6-phosphate + ATP = beta-D-fructose 1,6-bisphosphate + ADP + H(+). Its pathway is carbohydrate degradation; glycolysis; D-glyceraldehyde 3-phosphate and glycerone phosphate from D-glucose: step 3/4. Allosterically activated by AMP. Functionally, catalyzes the phosphorylation of D-fructose 6-phosphate to fructose 1,6-bisphosphate by ATP, the first committing step of glycolysis. This chain is ATP-dependent 6-phosphofructokinase, found in Trypanoplasma borreli.